A 300-amino-acid polypeptide reads, in one-letter code: Chaperone protein dnaJ 50 (300 aa).

The N-terminal stretch at 1–27 is a signal peptide; that stretch reads MAPPVTERWCLALILLFLSLFVQSSTA. Topologically, residues 28–122 are lumenal; that stretch reads IYCGAEDCYA…RAKYGHKSDP (95 aa). Residues 34-98 form the J domain; sequence DCYALLGVAQ…TTRAQYDYAI (65 aa). 2 N-linked (GlcNAc...) asparagine glycosylation sites follow: asparagine 46 and asparagine 88. The chain crosses the membrane as a helical span at residues 123-143; sequence RAVLVGLLVVLSAFQYLNNVA. Residues 144-206 lie on the Cytoplasmic side of the membrane; sequence RYNEAIATVK…LQIKGAEKPS (63 aa). A helical transmembrane segment spans residues 207-227; sequence VWELLGVRFILLPYTIIKLLV. The Lumenal segment spans residues 228 to 300; it reads WYSSWVWRYK…EMRKESKRRR (73 aa).

As to expression, expressed in leaves, flower buds and flowers.

Its subcellular location is the endoplasmic reticulum membrane. Functionally, may play a role in protein folding in the endoplasmic reticulum. This Arabidopsis thaliana (Mouse-ear cress) protein is Chaperone protein dnaJ 50 (C50).